We begin with the raw amino-acid sequence, 358 residues long: tRNA-specific 2-thiouridylase MnmA (358 aa).

ATP contacts are provided by residues 6 to 13 and M32; that span reads ALSGGVDS. The Nucleophile role is filled by C103. C103 and C201 form a disulfide bridge. G127 provides a ligand contact to ATP. The interaction with tRNA stretch occupies residues 151–153; it reads KDQ. Residue C201 is the Cysteine persulfide intermediate of the active site.

It belongs to the MnmA/TRMU family.

The protein localises to the cytoplasm. It catalyses the reaction S-sulfanyl-L-cysteinyl-[protein] + uridine(34) in tRNA + AH2 + ATP = 2-thiouridine(34) in tRNA + L-cysteinyl-[protein] + A + AMP + diphosphate + H(+). Catalyzes the 2-thiolation of uridine at the wobble position (U34) of tRNA, leading to the formation of s(2)U34. This chain is tRNA-specific 2-thiouridylase MnmA, found in Thermotoga petrophila (strain ATCC BAA-488 / DSM 13995 / JCM 10881 / RKU-1).